The sequence spans 78 residues: Small ribosomal subunit protein bS18 (78 aa).

The protein belongs to the bacterial ribosomal protein bS18 family. Part of the 30S ribosomal subunit. Forms a tight heterodimer with protein bS6.

Its function is as follows. Binds as a heterodimer with protein bS6 to the central domain of the 16S rRNA, where it helps stabilize the platform of the 30S subunit. This Limosilactobacillus fermentum (strain NBRC 3956 / LMG 18251) (Lactobacillus fermentum) protein is Small ribosomal subunit protein bS18.